A 30-amino-acid chain; its full sequence is Unknown protein from spot 365 of 2D-PAGE of etiolated coleoptile (30 aa).

The protein belongs to the zinc-containing alcohol dehydrogenase family.

The sequence is that of Unknown protein from spot 365 of 2D-PAGE of etiolated coleoptile from Zea mays (Maize).